Consider the following 184-residue polypeptide: MTWRSEHIWIELITGSRKISNFCWAFILFLGSLGFLLVGTSSYLGRNLISFFPPQQIVFFPQGIVMSFYGIAGLFISSYLWCTISWNVGSGYDRFDIKEGIVCIFRWGFPGKNRRIFLRFLIKDIQSVRIEVKEGIYARRVLYMDIRGQGSIPLTRTDENLTPREIEQKAAELAYFLRVPIEVF.

2 helical membrane passes run 19–39 (ISNFCWAFILFLGSLGFLLVG) and 57–77 (IVFFPQGIVMSFYGIAGLFIS).

The protein belongs to the Ycf4 family.

Its subcellular location is the plastid. The protein localises to the chloroplast thylakoid membrane. In terms of biological role, seems to be required for the assembly of the photosystem I complex. The chain is Photosystem I assembly protein Ycf4 from Nicotiana tomentosiformis (Tobacco).